The following is a 329-amino-acid chain: Gibberellin 2-beta-dioxygenase 1 (329 aa).

Residues 165-273 enclose the Fe2OG dioxygenase domain; it reads NTDSILRLNH…RVSMIYFAGP (109 aa). Residues histidine 197, aspartate 199, and histidine 254 each coordinate Fe cation. The active site involves arginine 264. Residue arginine 264 participates in 2-oxoglutarate binding.

Belongs to the iron/ascorbate-dependent oxidoreductase family. GA2OX subfamily. Fe(2+) is required as a cofactor. As to expression, preferentially expressed in flowers, siliques, and upper stems. Not expressed in the apex.

The enzyme catalyses gibberellin A1 + 2-oxoglutarate + O2 = gibberellin A8 + succinate + CO2. The protein operates within plant hormone biosynthesis; gibberellin biosynthesis. Functionally, catalyzes the 2-beta-hydroxylation of several biologically active gibberellins, leading to the homeostatic regulation of their endogenous level. Catabolism of gibberellins (GAs) plays a central role in plant development. Converts GA9/GA20 to GA51/GA29 and GA4/GA1 to GA34/GA8. This Arabidopsis thaliana (Mouse-ear cress) protein is Gibberellin 2-beta-dioxygenase 1 (GA2OX1).